A 109-amino-acid chain; its full sequence is ATPase inhibitor mai-2, mitochondrial (109 aa).

2 disordered regions span residues arginine 17–aspartate 39 and glutamine 73–arginine 95. The segment covering glycine 21–glycine 35 has biased composition (gly residues). A coiled-coil region spans residues glycine 45–glutamate 109.

This sequence belongs to the ATPase inhibitor family.

It localises to the mitochondrion. Thought to be a regulatory component of the ATP-synthesizing complex in the mitochondria. This chain is ATPase inhibitor mai-2, mitochondrial, found in Caenorhabditis briggsae.